Consider the following 500-residue polypeptide: Probable cytosol aminopeptidase (500 aa).

Mn(2+)-binding residues include Lys264 and Asp269. The active site involves Lys276. Residues Asp287, Asp346, and Glu348 each coordinate Mn(2+). Residue Arg350 is part of the active site.

It belongs to the peptidase M17 family. It depends on Mn(2+) as a cofactor.

The protein localises to the cytoplasm. It carries out the reaction Release of an N-terminal amino acid, Xaa-|-Yaa-, in which Xaa is preferably Leu, but may be other amino acids including Pro although not Arg or Lys, and Yaa may be Pro. Amino acid amides and methyl esters are also readily hydrolyzed, but rates on arylamides are exceedingly low.. It catalyses the reaction Release of an N-terminal amino acid, preferentially leucine, but not glutamic or aspartic acids.. Its function is as follows. Presumably involved in the processing and regular turnover of intracellular proteins. Catalyzes the removal of unsubstituted N-terminal amino acids from various peptides. The sequence is that of Probable cytosol aminopeptidase from Chlamydia abortus (strain DSM 27085 / S26/3) (Chlamydophila abortus).